The primary structure comprises 238 residues: ATP synthase subunit a (238 aa).

5 helical membrane passes run 18 to 38 (LTIL…VFWA), 75 to 95 (YSLL…LGLM), 112 to 132 (NFGV…IEGI), 179 to 199 (VVTG…PLAF), and 203 to 223 (IVWT…FIIL).

The protein belongs to the ATPase A chain family. As to quaternary structure, F-type ATPases have 2 components, CF(1) - the catalytic core - and CF(0) - the membrane proton channel. CF(1) has five subunits: alpha(3), beta(3), gamma(1), delta(1), epsilon(1). CF(0) has three main subunits: a(1), b(2) and c(9-12). The alpha and beta chains form an alternating ring which encloses part of the gamma chain. CF(1) is attached to CF(0) by a central stalk formed by the gamma and epsilon chains, while a peripheral stalk is formed by the delta and b chains.

Its subcellular location is the cell membrane. In terms of biological role, key component of the proton channel; it plays a direct role in the translocation of protons across the membrane. This Streptococcus agalactiae serotype III (strain NEM316) protein is ATP synthase subunit a.